The primary structure comprises 124 residues: Thioredoxin domain-containing protein C21C3.12c (124 aa).

In terms of domain architecture, Thioredoxin spans 37 to 124 (PWCPTVRAAL…ANKFSKFIDI (88 aa)). The Nucleophile role is filled by cysteine 39.

Belongs to the thioredoxin family.

Its subcellular location is the cytoplasm. The protein localises to the nucleus. This chain is Thioredoxin domain-containing protein C21C3.12c, found in Schizosaccharomyces pombe (strain 972 / ATCC 24843) (Fission yeast).